The chain runs to 129 residues: MPFDLDSLKYNEAGLVPAIVQDAGTGAVLMMAYMNREALEKTLATGETWFWSRSRKAFWHKGETSGNVQRVKEVLYDCDRDTLLVKVEQHGAACHEGYYSCFHYRLERDGSVTVVGEKQFDPEQVYGKR.

Aspartate 77 is a Mg(2+) binding site. Residue cysteine 78 participates in Zn(2+) binding. Residues aspartate 79 and aspartate 81 each contribute to the Mg(2+) site. Residues cysteine 94 and cysteine 101 each contribute to the Zn(2+) site.

It belongs to the PRA-CH family. As to quaternary structure, homodimer. Requires Mg(2+) as cofactor. Zn(2+) is required as a cofactor.

The protein resides in the cytoplasm. It catalyses the reaction 1-(5-phospho-beta-D-ribosyl)-5'-AMP + H2O = 1-(5-phospho-beta-D-ribosyl)-5-[(5-phospho-beta-D-ribosylamino)methylideneamino]imidazole-4-carboxamide. Its pathway is amino-acid biosynthesis; L-histidine biosynthesis; L-histidine from 5-phospho-alpha-D-ribose 1-diphosphate: step 3/9. Its function is as follows. Catalyzes the hydrolysis of the adenine ring of phosphoribosyl-AMP. This chain is Phosphoribosyl-AMP cyclohydrolase, found in Pelotomaculum thermopropionicum (strain DSM 13744 / JCM 10971 / SI).